Reading from the N-terminus, the 240-residue chain is Proteasome subunit beta type-1 (240 aa).

Met-1 carries the post-translational modification N-acetylmethionine. The propeptide occupies 1-27 (MLSTAAYRDPDRELVMGPQGSAGPVQM). Ser-57 is a glycosylation site (O-linked (GlcNAc) serine). Ser-61 and Ser-67 each carry phosphoserine. Tyr-149 is subject to Phosphotyrosine. Ser-161 is modified (phosphoserine). Position 203 is an N6-acetyllysine (Lys-203). An O-linked (GlcNAc) serine glycan is attached at Ser-208.

It belongs to the peptidase T1B family. In terms of assembly, the 26S proteasome consists of a 20S proteasome core and two 19S regulatory subunits. The 20S proteasome core is a barrel-shaped complex made of 28 subunits that are arranged in four stacked rings. The two outer rings are each formed by seven alpha subunits, and the two inner rings are formed by seven beta subunits. The proteolytic activity is exerted by three beta-subunits PSMB5, PSMB6 and PSMB7. Interacts with SERPINB2. Interacts with RFPL4A. As to expression, ubiquitous.

It is found in the cytoplasm. The protein localises to the nucleus. Non-catalytic component of the 20S core proteasome complex involved in the proteolytic degradation of most intracellular proteins. This complex plays numerous essential roles within the cell by associating with different regulatory particles. Associated with two 19S regulatory particles, forms the 26S proteasome and thus participates in the ATP-dependent degradation of ubiquitinated proteins. The 26S proteasome plays a key role in the maintenance of protein homeostasis by removing misfolded or damaged proteins that could impair cellular functions, and by removing proteins whose functions are no longer required. Associated with the PA200 or PA28, the 20S proteasome mediates ubiquitin-independent protein degradation. This type of proteolysis is required in several pathways including spermatogenesis (20S-PA200 complex) or generation of a subset of MHC class I-presented antigenic peptides (20S-PA28 complex). In Rattus norvegicus (Rat), this protein is Proteasome subunit beta type-1 (Psmb1).